Here is a 261-residue protein sequence, read N- to C-terminus: Calbindin (261 aa).

N-acetylalanine is present on alanine 2. Residues 2–7 form an interaction with RANBP9 region; sequence AESHLQ. 5 EF-hand domains span residues 11 to 46, 53 to 88, 98 to 133, 142 to 177, and 186 to 221; these read ITAS…LQQA, ELSP…EENF, KSCE…LLEK, KLAE…QENF, and MCGK…LCEK. Aspartate 24, aspartate 26, serine 28, tyrosine 30, and glutamate 35 together coordinate Ca(2+). Positions 111, 113, 122, 155, 157, 159, 161, 166, 199, 201, 203, 205, and 210 each coordinate Ca(2+).

It belongs to the calbindin family. In terms of assembly, interacts with RANBP9.

In terms of biological role, buffers cytosolic calcium. May stimulate a membrane Ca(2+)-ATPase and a 3',5'-cyclic nucleotide phosphodiesterase. This chain is Calbindin (CALB1), found in Pongo abelii (Sumatran orangutan).